The primary structure comprises 344 residues: Mitochondrial genome maintenance exonuclease 1 (344 aa).

Catalysis depends on residues D238, D251, and K253. Residue S343 is modified to Phosphoserine.

This sequence belongs to the MGME1 family.

The protein resides in the mitochondrion. Functionally, metal-dependent single-stranded DNA (ssDNA) exonuclease involved in mitochondrial genome maintenance. Has preference for 5'-3' exonuclease activity but is also capable of endonuclease activity on linear substrates. Necessary for maintenance of proper 7S DNA levels. Probably involved in mitochondrial DNA (mtDNA) repair, possibly via the processing of displaced DNA containing Okazaki fragments during RNA-primed DNA synthesis on the lagging strand or via processing of DNA flaps during long-patch base excision repair. Specifically binds 5-hydroxymethylcytosine (5hmC)-containing DNA in stem cells. In Homo sapiens (Human), this protein is Mitochondrial genome maintenance exonuclease 1.